A 534-amino-acid polypeptide reads, in one-letter code: Glycerophosphodiester transporter GIT2 (534 aa).

Helical transmembrane passes span 63 to 83, 96 to 116, 135 to 155, 163 to 183, 202 to 222, 230 to 250, 289 to 309, 322 to 342, 350 to 370, 377 to 397, 417 to 437, and 453 to 473; these read GAGLFADGYVNNSIGIVMACL, AISNIGSIGFVGTVVGQLSFG, LIAFTLLCAVGSWGTTIQGFF, FCLGVAIGAEYPTSSVIASEF, FMIDFGFVVSAFVPFVLLWIF, LWRVSIGLGAILPTALFFIRL, MIWFIYNFSVYSFGTFNAIIL, WGWSVVFNLFYIPGSFLGAFS, LTLAIGVGLQGIIGFIMSACL, VAAFTVVFGIFATLGEFGPGG, GIAAAMGKIGAFVGTWIFPAI, and VPFYLSSGLCIFSALLTFFLC.

This sequence belongs to the major facilitator superfamily. Sugar transporter (TC 2.A.1.1) family.

Its subcellular location is the cell membrane. Functionally, probable glycerophosphodiester transporter. Does not possess detectable glycerophosphoinositol (GroPIns) transport activity. Might be involved in the uptake of glycerophosphocholine (GroPCho). The expanded ability to utilize GroPIns and GroPCho results from the organism's pathogenic nature and its need to occupy a variety of environments within its host organism. This possibility is buttressed by the fact that GroPIns and GroPCho are present and abundant in human fluids. This is Glycerophosphodiester transporter GIT2 from Candida albicans (strain SC5314 / ATCC MYA-2876) (Yeast).